The sequence spans 90 residues: Probable Fe(2+)-trafficking protein (90 aa).

This sequence belongs to the Fe(2+)-trafficking protein family.

Its function is as follows. Could be a mediator in iron transactions between iron acquisition and iron-requiring processes, such as synthesis and/or repair of Fe-S clusters in biosynthetic enzymes. In Cupriavidus necator (strain ATCC 17699 / DSM 428 / KCTC 22496 / NCIMB 10442 / H16 / Stanier 337) (Ralstonia eutropha), this protein is Probable Fe(2+)-trafficking protein.